The following is a 591-amino-acid chain: Metalloendopeptidase OPG085 (591 aa).

Zn(2+) is bound at residue histidine 41. Glutamate 44 is a catalytic residue. Histidine 45 lines the Zn(2+) pocket.

Belongs to the peptidase M44 family. Zn(2+) serves as cofactor. Undergoes proteolytic processing during the course of infection. May be cleaved into 46 kDa and 22 kDa products (Potential).

The protein resides in the virion. In terms of biological role, probably involved in maturation of some viral proteins by processing them preferentially at Ala-Gly-|-Ser/Thr/Lys motifs. Does not seem to be responsible for the cleavage of major core proteins. The sequence is that of Metalloendopeptidase OPG085 (OPG085) from Homo sapiens (Human).